Reading from the N-terminus, the 1272-residue chain is Protein diaphanous homolog 1 (1272 aa).

N-acetylmethionine is present on M1. Gly residues predominate over residues 1-12; the sequence is MEPPGGSLGPGR. The interval 1–84 is disordered; it reads MEPPGGSLGP…YGDDPTAQSL (84 aa). A phosphoserine mark is found at S7, S22, and S36. A compositionally biased stretch (basic and acidic residues) spans 44-65; the sequence is LMADELERFTSMRIKKEKEKPN. Polar residues predominate over residues 67 to 84; the sequence is AHRNSSASYGDDPTAQSL. Positions 84–449 constitute a GBD/FH3 domain; the sequence is LQDVSDEQVL…QIVLHKNGAD (366 aa). A coiled-coil region spans residues 468-572; the sequence is MIDKTKVEKS…ASLSAAAITV (105 aa). Residues 573–755 are disordered; it reads PPSVPSRAPV…GMPPPPPFGF (183 aa). Composition is skewed to pro residues over residues 574–589, 596–622, and 640–658; these read PSVP…PPLP, IPPP…PPLP, and SPPP…PPLP. The FH1 domain occupies 583–764; the sequence is PPAPPLPGDS…FGVPAAPVLP (182 aa). Residues 659-674 show a composition bias toward low complexity; it reads EGVGIPSPSSLPGGTA. The segment covering 675–753 has biased composition (pro residues); the sequence is IPPPPPLPGS…GMGMPPPPPF (79 aa). Residue T768 is modified to Phosphothreonine. In terms of domain architecture, FH2 spans 769 to 1171; it reads PKKLYKPEVQ…MRRAKLAKEK (403 aa). A coiled-coil region spans residues 1039 to 1196; that stretch reads DELAHVEKAS…IDMNAEGDET (158 aa). N6-acetyllysine is present on residues K1057 and K1103. The residue at position 1121 (Y1121) is a Phosphotyrosine. In terms of domain architecture, DAD spans 1194–1222; that stretch reads DETGVMDSLLEALQSGAAFRRKRGPRQAN. S1251 and S1254 each carry phosphoserine.

It belongs to the formin homology family. Diaphanous subfamily. In terms of assembly, homodimer. Interacts with the GTP-bound form of RHOA. Interacts with RHOC, PFY1, MAPRE1 and BAIAP2. Interacts with APC; acts as a scaffold protein for MAPRE1 and APC to stabilize microtubules and promote cell migration. Interacts with SCAI. Interacts with DCAF7, via FH2 domain. Interacts with NCDN. Interacts with OSBPL10, OSBPL2, VIM, TUBB and DYN1. Post-translationally, phosphorylation at Thr-768 is stimulated by cAMP and regulates stability, complex formation and mitochondrial movement. In terms of tissue distribution, expressed in brain, heart, placenta, lung, kidney, pancreas, liver, skeletal muscle and cochlea. Expressed in platelets.

The protein localises to the cell membrane. It localises to the cell projection. It is found in the ruffle membrane. The protein resides in the cytoplasm. Its subcellular location is the cytoskeleton. The protein localises to the microtubule organizing center. It localises to the centrosome. It is found in the spindle. The protein resides in the nucleus. Functionally, actin nucleation and elongation factor required for the assembly of F-actin structures, such as actin cables and stress fibers. Binds to the barbed end of the actin filament and slows down actin polymerization and depolymerization. Required for cytokinesis, and transcriptional activation of the serum response factor. DFR proteins couple Rho and Src tyrosine kinase during signaling and the regulation of actin dynamics. Functions as a scaffold protein for MAPRE1 and APC to stabilize microtubules and promote cell migration. Has neurite outgrowth promoting activity. Acts in a Rho-dependent manner to recruit PFY1 to the membrane. In hear cells, it may play a role in the regulation of actin polymerization in hair cells. The MEMO1-RHOA-DIAPH1 signaling pathway plays an important role in ERBB2-dependent stabilization of microtubules at the cell cortex. It controls the localization of APC and CLASP2 to the cell membrane, via the regulation of GSK3B activity. In turn, membrane-bound APC allows the localization of the MACF1 to the cell membrane, which is required for microtubule capture and stabilization. Plays a role in the regulation of cell morphology and cytoskeletal organization. Required in the control of cell shape. Plays a role in brain development. Also acts as an actin nucleation and elongation factor in the nucleus by promoting nuclear actin polymerization inside the nucleus to drive serum-dependent SRF-MRTFA activity. The polypeptide is Protein diaphanous homolog 1 (DIAPH1) (Homo sapiens (Human)).